Here is a 596-residue protein sequence, read N- to C-terminus: Fumarate reductase (cytochrome) (596 aa).

The first 25 residues, methionine 1–alanine 25, serve as a signal peptide directing secretion. Heme c is bound by residues histidine 33, cysteine 39, cysteine 42, histidine 43, cysteine 61, cysteine 64, histidine 65, histidine 83, histidine 86, cysteine 93, cysteine 96, histidine 97, alanine 99, histidine 100, cysteine 107, cysteine 110, and histidine 111. A flavoprotein-like region spans residues alanine 143 to asparagine 596. Residues alanine 162, glutamate 181, asparagine 189, alanine 194, glycine 195, glycine 196, glycine 303, and aspartate 369 each contribute to the FAD site. Glycine 195 serves as a coordination point for fumarate. Succinate is bound at residue glycine 195. Residue tyrosine 386 coordinates heme c. Histidine 390, threonine 402, and glutamate 403 together coordinate succinate. Positions 402 and 403 each coordinate fumarate. The active-site Proton donor is arginine 427. Histidine 529 is a binding site for fumarate. Succinate is bound at residue histidine 529. 2 residues coordinate FAD: histidine 530 and glutamate 559. The fumarate site is built by arginine 569 and glycine 572. Positions 569 and 572 each coordinate succinate. FAD contacts are provided by alanine 574 and isoleucine 575.

In the C-terminal section; belongs to the FAD-dependent oxidoreductase 2 family. FRD/SDH subfamily. As to quaternary structure, monomer. The cofactor is FAD. Requires heme c as cofactor.

The protein resides in the periplasm. The enzyme catalyses 2 Fe(III)-[cytochrome c] + succinate = fumarate + 2 Fe(II)-[cytochrome c] + 2 H(+). With respect to regulation, mesaconic acid is a competitive inhibitor of fumarate reduction. In terms of biological role, flavocytochrome that catalyzes the reduction of fumarate to succinate. Is essential for fumarate respiration during anaerobic growth, acting as the terminal reductase. Receives electrons from the membrane-bound tetraheme c-type cytochrome CymA. Is essentially unidirectional, catalyzing only fumarate reduction. Cannot reduce nitrite, dimethylsulphoxide, trimethylamine-N-oxide (TMAO) or sulfite. In vitro, can use the artificial electron donor methyl viologen. The polypeptide is Fumarate reductase (cytochrome) (Shewanella frigidimarina (strain NCIMB 400)).